Consider the following 30-residue polypeptide: Kalata-B10 (30 aa).

The segment at residues G1–D30 is a cross-link (cyclopeptide (Gly-Asp)). 3 disulfide bridges follow: C5–C19, C9–C21, and C14–C27.

The protein belongs to the cyclotide family. Moebius subfamily. This peptide occurs in both cyclic and linear forms. The linear form contains unmodified Trp-24, the cyclic peptide occurs in two forms with unmodified Trp-24, and with Trp-24 oxidized to form oxindolylalanine. Oxidation is enhanced by exposure to sunlight.

Functionally, probably participates in a plant defense mechanism. In Oldenlandia affinis, this protein is Kalata-B10.